Reading from the N-terminus, the 519-residue chain is Ribonuclease Y (519 aa).

The helical transmembrane segment at 3–23 (PMTVLISILLTLLGLVVGYYV) threads the bilayer. The KH domain occupies 209 to 272 (TVSVVNLPND…ETARIALDKL (64 aa)). Positions 335–428 (VLKHSMEVAF…VAAADALSAA (94 aa)) constitute an HD domain.

Belongs to the RNase Y family.

The protein resides in the cell membrane. Its function is as follows. Endoribonuclease that initiates mRNA decay. This chain is Ribonuclease Y, found in Bacillus velezensis (strain DSM 23117 / BGSC 10A6 / LMG 26770 / FZB42) (Bacillus amyloliquefaciens subsp. plantarum).